A 798-amino-acid polypeptide reads, in one-letter code: Integrin beta-1 (798 aa).

An N-terminal signal peptide occupies residues 1-20; that stretch reads MNLQPIFWIGLISSICCVFA. Residues 26 to 76 form the PSI domain; sequence RCLKANAKSCGECIQAGPNCGWCTNSTFLQEGMPTSARCDDLEALKKKGCP. 28 disulfides stabilise this stretch: Cys27/Cys45, Cys35/Cys464, Cys38/Cys64, Cys48/Cys75, Cys207/Cys213, Cys261/Cys301, Cys401/Cys415, Cys435/Cys462, Cys466/Cys486, Cys477/Cys489, Cys491/Cys500, Cys502/Cys533, Cys516/Cys531, Cys525/Cys536, Cys538/Cys553, Cys555/Cys576, Cys560/Cys574, Cys568/Cys579, Cys581/Cys590, Cys592/Cys615, Cys599/Cys613, Cys607/Cys618, Cys620/Cys630, Cys633/Cys636, Cys640/Cys691, Cys646/Cys665, Cys649/Cys661, and Cys699/Cys723. N-linked (GlcNAc...) asparagine glycosylation occurs at Asn50. Residues 75–107 form a disordered region; sequence CPPDDIENPRGSKDIKKNKNVTNRSKGTAEKLK. The segment covering 81-91 has biased composition (basic and acidic residues); sequence ENPRGSKDIKK. Residues Asn94 and Asn97 are each glycosylated (N-linked (GlcNAc...) asparagine). The region spanning 140-378 is the VWFA domain; it reads DYPIDLYYLM…QLIIDAYNSL (239 aa). Mg(2+) contacts are provided by Ser152 and Ser154. Ca(2+) contacts are provided by Ser154, Asp157, Asp158, and Glu189. Residues 207–213 are CX3CL1-binding; it reads CTSEQNC. Residue Asn212 is glycosylated (N-linked (GlcNAc...) asparagine). Ca(2+)-binding residues include Asn244, Asp246, Pro248, and Glu249. Position 249 (Glu249) interacts with Mg(2+). Asn269 carries N-linked (GlcNAc...) asparagine glycosylation. The segment at 295–314 is CX3CL1-binding; it reads LPNDGQCHLENNMYTMSHYY. Ala362 lines the Ca(2+) pocket. Asn363, Asn406, and Asn417 each carry an N-linked (GlcNAc...) asparagine glycan. The segment at 383–465 is interaction with TMEM182; it reads ILENSKLSEG…VILQYICECE (83 aa). I-EGF domains lie at 466–501, 502–554, 555–591, and 592–631; these read CQSE…RHCE, CSTD…KFCE, CDNF…SACD, and CSLD…QTCE. Asn481 carries N-linked (GlcNAc...) asparagine glycosylation. An N-linked (GlcNAc...) asparagine glycan is attached at Asn520. Asn584 is a glycosylation site (N-linked (GlcNAc...) asparagine). N-linked (GlcNAc...) asparagine glycosylation is present at Asn669. A helical membrane pass occupies residues 729 to 749; sequence IIPIVAGVVAGIVLIGLALLL. Residues 762-767 are signal for sorting from recycling endosomes; interaction with ACAP1; it reads EFAKFE. The residue at position 777 (Thr777) is a Phosphothreonine. Phosphotyrosine is present on Tyr783. Phosphoserine is present on Ser785. The interaction with ITGB1BP1 stretch occupies residues 785-792; the sequence is SAVTTVVN. Thr789 bears the Phosphothreonine mark. Lys794 carries the N6-acetyllysine; alternate modification. Lys794 is covalently cross-linked (Glycyl lysine isopeptide (Lys-Gly) (interchain with G-Cter in SUMO1); alternate).

It belongs to the integrin beta chain family. Interacts with seprase FAP (seprase); the interaction occurs at the cell surface of invadopodia membrane in a collagen-dependent manner. Heterodimer of an alpha and a beta subunit. Beta-1 associates with either alpha-1, alpha-2, alpha-3, alpha-4, alpha-5, alpha-6, alpha-7, alpha-8, alpha-9, alpha-10, alpha-11 or alpha-V. ITGA6:ITGB1 is found in a complex with CD9; interaction takes place in oocytes and is involved in sperm-egg fusion. Binds LGALS3BP and NMRK2, when associated with alpha-7, but not with alpha-5. Interacts with FLNA, FLNB, FLNC and RANBP9. Interacts with KRT1 in the presence of RACK1 and SRC. Interacts with JAML; integrin alpha-4/beta-1 may regulate leukocyte to endothelial cells adhesion by controlling JAML homodimerization. Interacts with RAB21. Interacts (via the cytoplasmic region) with RAB25 (via the hypervariable C-terminal region). Interacts with MYO10. Interacts with ITGB1BP1 (via C-terminal region); the interaction is a prerequisite for focal adhesion disassembly. Interacts with TLN1; the interaction is prevented by competitive binding of ITGB1BP1. Interacts with ACAP1; required for ITGB1 recycling. Interacts with ASAP3. Interacts with FERMT2; the interaction is inhibited in presence of ITGB1BP1. Interacts with DAB2. Interacts with FGR and HCK. Interacts with alpha-7A and alpha-7B in adult skeletal muscle. Interacts with alpha-7B in cardiomyocytes of adult heart. Interacts with EMP2; the interaction may be direct or indirect and ITGB1 has a heterodimer form. ITGA5:ITGB1 interacts with CCN3. ITGA4:ITGB1 is found in a ternary complex with CX3CR1 and CX3CL1. ITGA5:ITGB1 interacts with FBN1. ITGA5:ITGB1 acts as a receptor for fibronectin FN1 and mediates R-G-D-dependent cell adhesion to FN1. ITGA5:ITGB1 interacts with IL1B. Interacts with MDK. ITGA4:ITGB1 interacts with MDK; this interaction mediates MDK-induced osteoblast cells migration through PXN phosphorylation. ITGA6:ITGB1 interacts with MDK; this interaction mediates MDK-induced neurite-outgrowth. ITGA5:ITGB1 interacts with ACE2. Interacts with TMEM182 and LAMB1. Interacts with tensin TNS3; TNS3 also interacts with PEAK1, thus acting as an adapter molecule to bridge the association of PEAK1 with ITGB1. Interacts with tensin TNS4; the interaction displaces tensin TNS3 from the ITGB1 cytoplasmic tail and promotes ITGB1 stability. Integrin ITGA9:ITGB1 interacts with SPP1/OPN (via N-terminus). Integrin ITGA9:ITGB1 interacts with TNC/TNFN3 (via the 3rd Fibronectin type-III domain). Integrins ITGA4:ITGB1 and ITGA9:ITGB1 interact with SVEP1 (via Sushi domain 21); thereby inhibit Ca(2+) intracellular signaling and as a result repress vasocontraction. ITGA4:ITGB1 and ITGA5:ITGB1 interacts with SELP. Interacts with CD248. ITGA5:ITGB1 interacts with IGFBP1. ITGA4:ITGB1 interacts with BCAM. Interacts with ADGRG6.

The protein localises to the cell membrane. It is found in the cell projection. It localises to the invadopodium membrane. Its subcellular location is the ruffle membrane. The protein resides in the recycling endosome. The protein localises to the melanosome. It is found in the lamellipodium. It localises to the ruffle. Its subcellular location is the cell junction. The protein resides in the focal adhesion. Integrins alpha-1/beta-1, alpha-2/beta-1, alpha-10/beta-1 and alpha-11/beta-1 are receptors for collagen. Integrins alpha-1/beta-1 and alpha-2/beta-2 recognize the proline-hydroxylated sequence G-F-P-G-E-R in collagen. Integrins alpha-2/beta-1, alpha-3/beta-1, alpha-4/beta-1, alpha-5/beta-1, alpha-8/beta-1, alpha-10/beta-1, alpha-11/beta-1 and alpha-V/beta-1 are receptors for fibronectin. Alpha-4/beta-1 recognizes one or more domains within the alternatively spliced CS-1 and CS-5 regions of fibronectin. Integrin alpha-5/beta-1 is a receptor for fibrinogen. Integrin alpha-1/beta-1, alpha-2/beta-1, alpha-6/beta-1 and alpha-7/beta-1 are receptors for lamimin. Integrin alpha-6/beta-1 (ITGA6:ITGB1) is present in oocytes and is involved in sperm-egg fusion. Integrin alpha-4/beta-1 is a receptor for VCAM1 and recognizes the sequence Q-I-D-S in VCAM1. Integrin alpha-9/beta-1 is a receptor for VCAM1, cytotactin and osteopontin. It recognizes the sequence A-E-I-D-G-I-E-L in cytotactin. Integrin alpha-3/beta-1 is a receptor for epiligrin, thrombospondin and CSPG4. Integrin alpha-3/beta-1 provides a docking site for FAP (seprase) at invadopodia plasma membranes in a collagen-dependent manner and hence may participate in the adhesion, formation of invadopodia and matrix degradation processes, promoting cell invasion. Alpha-3/beta-1 may mediate with LGALS3 the stimulation by CSPG4 of endothelial cells migration. Integrin alpha-V/beta-1 is a receptor for vitronectin. Beta-1 integrins recognize the sequence R-G-D in a wide array of ligands. When associated with alpha-7/beta-1 integrin, regulates cell adhesion and laminin matrix deposition. Involved in promoting endothelial cell motility and angiogenesis. Involved in osteoblast compaction through the fibronectin fibrillogenesis cell-mediated matrix assembly process and the formation of mineralized bone nodules. May be involved in up-regulation of the activity of kinases such as PKC via binding to KRT1. Together with KRT1 and RACK1, serves as a platform for SRC activation or inactivation. Plays a mechanistic adhesive role during telophase, required for the successful completion of cytokinesis. ITGA4:ITGB1 binds to fractalkine (CX3CL1) and may act as its coreceptor in CX3CR1-dependent fractalkine signaling. ITGA4:ITGB1 and ITGA5:ITGB1 bind to PLA2G2A via a site (site 2) which is distinct from the classical ligand-binding site (site 1) and this induces integrin conformational changes and enhanced ligand binding to site 1. ITGA5:ITGB1 acts as a receptor for fibrillin-1 (FBN1) and mediates R-G-D-dependent cell adhesion to FBN1. ITGA5:ITGB1 is a receptor for IL1B and binding is essential for IL1B signaling. ITGA5:ITGB3 is a receptor for soluble CD40LG and is required for CD40/CD40LG signaling. Plays an important role in myoblast differentiation and fusion during skeletal myogenesis. ITGA9:ITGB1 may play a crucial role in SVEP1/polydom-mediated myoblast cell adhesion. Integrins ITGA9:ITGB1 and ITGA4:ITGB1 repress PRKCA-mediated L-type voltage-gated channel Ca(2+) influx and ROCK-mediated calcium sensitivity in vascular smooth muscle cells via their interaction with SVEP1, thereby inhibit vasocontraction. In Pongo abelii (Sumatran orangutan), this protein is Integrin beta-1 (ITGB1).